The sequence spans 495 residues: Chromosomal replication initiator protein DnaA (495 aa).

Residues 1–91 (MTADPDPPFV…ITALSRHLGQ (91 aa)) form a domain I, interacts with DnaA modulators region. The domain II stretch occupies residues 91–154 (QRVELGVRIA…TPAAEDPNAV (64 aa)). The tract at residues 155 to 371 (SLNRRYTFDT…GALIRVTAFA (217 aa)) is domain III, AAA+ region. ATP is bound by residues Gly-199, Gly-201, Lys-202, and Thr-203. The interval 372–495 (SLNKTPIDKS…TTRIRQRAKR (124 aa)) is domain IV, binds dsDNA.

This sequence belongs to the DnaA family. As to quaternary structure, oligomerizes as a right-handed, spiral filament on DNA at oriC.

It is found in the cytoplasm. Its function is as follows. Plays an essential role in the initiation and regulation of chromosomal replication. ATP-DnaA binds to the origin of replication (oriC) to initiate formation of the DNA replication initiation complex once per cell cycle. Binds the DnaA box (a 9 base pair repeat at the origin) and separates the double-stranded (ds)DNA. Forms a right-handed helical filament on oriC DNA; dsDNA binds to the exterior of the filament while single-stranded (ss)DNA is stabiized in the filament's interior. The ATP-DnaA-oriC complex binds and stabilizes one strand of the AT-rich DNA unwinding element (DUE), permitting loading of DNA polymerase. After initiation quickly degrades to an ADP-DnaA complex that is not apt for DNA replication. Binds acidic phospholipids. The chain is Chromosomal replication initiator protein DnaA from Mycobacterium sp. (strain JLS).